Here is a 97-residue protein sequence, read N- to C-terminus: YcgL domain-containing protein Maqu_1609 (97 aa).

A YcgL domain is found at 5–89; sequence EFVSVFRSSK…EQDTYIVDFK (85 aa).

This chain is YcgL domain-containing protein Maqu_1609, found in Marinobacter nauticus (strain ATCC 700491 / DSM 11845 / VT8) (Marinobacter aquaeolei).